Here is a 2587-residue protein sequence, read N- to C-terminus: Clavatol synthase claF (2587 aa).

Residues 93 to 256 (LLSPLVVIVQ…TEVALSGRFH (164 aa)) are N-terminal acylcarrier protein transacylase domain (SAT). Catalysis depends on Cys137, which acts as the Nucleophile; for transacylase activity. Catalysis depends on His256, which acts as the Proton donor/acceptor; for transacylase activity. The Ketosynthase family 3 (KS3) domain occupies 383 to 799 (DDQIAVIGMA…GSNASMIITQ (417 aa)). Catalysis depends on for beta-ketoacyl synthase activity residues Cys548, His683, and His722. The tract at residues 912–1222 (CFGGQISTYV…ESLPLLAEAT (311 aa)) is malonyl-CoA:ACP transacylase (MAT) domain. The segment at 1284–1416 (PKGLTTFIGF…GSIVFLPASD (133 aa)) is N-terminal hotdog fold. Residues 1284–1595 (PKGLTTFIGF…YRLVPMDSMR (312 aa)) form the PKS/mFAS DH domain. The product template (PT) domain stretch occupies residues 1315-1593 (LTSANVALNT…ISYRLVPMDS (279 aa)). The segment at 1436–1595 (ASLLQGNGAD…YRLVPMDSMR (160 aa)) is C-terminal hotdog fold. Positions 1609-1635 (STAAVSSKSTPVHAPTPTTTVSSTPSS) are disordered. Low complexity predominate over residues 1617 to 1635 (STPVHAPTPTTTVSSTPSS). The 75-residue stretch at 1654-1728 (PDISAKMCEI…SLVSCIRSTL (75 aa)) folds into the Carrier domain. Residue Ser1688 is modified to O-(pantetheine 4'-phosphoryl)serine. Catalysis depends on for methyltransferase activity residues Tyr1947, His2059, and Glu2085. Positions 1952–2126 (VNTVWIKQLE…ATYWEKVLQS (175 aa)) are methyltransferase (CMeT) domain. Residues 2208-2452 (SLSSGQCVLV…KILPELDGTL (245 aa)) form an NADPH-binding (R) domain region.

Pantetheine 4'-phosphate serves as cofactor.

The catalysed reaction is 3 malonyl-CoA + acetyl-CoA + AH2 + 2 S-adenosyl-L-methionine + H(+) = clavatol + A + 2 S-adenosyl-L-homocysteine + 3 CO2 + 4 CoA + H2O. It participates in secondary metabolite biosynthesis. Non-reducing polyketide synthase; part of the cla gene cluster that produces clavatol and ortho-quinone methide. The clavatol biosynthesis cluster cla and the terrestric acid cluster tra are both involved in the production of peniphenones and penilactones. The non-reducing PKS claF is responsible for the formation of clavatol from successive condensations of 3 malonyl-CoA units, presumably with a simple acetyl-CoA starter unit, and 2 methylation steps. The esterase claE probably collaborates with claF by catalyzing the hydrolysis of ACP-bound acyl intermediates to free the ACP from stalled intermediates. The clavatol oxidase claD then converts clavatol to hydroxyclavatol. Spontaneous dehydration of hydroxyclavatol leads to the accumulation of the highly active ortho-quinone methide. On the other hand, the PKS-NRPS hybrid traA is involved in the formation of crustosic acid, with the help of traB and traD. The polyketide synthase module (PKS) of traA is responsible for the synthesis of the polyketide backbone via the condensation of an acetyl-CoA starter unit with 3 malonyl-CoA units. The downstream nonribosomal peptide synthetase (NRPS) module then amidates the carboxyl end of the polyketide with L-malic acid. Because traA lacks a designated enoylreductase (ER) domain, the required activity is provided the enoyl reductase traG. Crustosic acid undergoes decarboxylation and isomerization to the terrestric acid, catalyzed by the 2-oxoglutarate-dependent dioxygenase traH. Both acids are further converted to the 2 gamma-butyrolactones (R)-5-methyltetronic acid and (S)-5-carboxylmethyltetronic acid, with involvement of the cytochrome P450 monooxygenase claJ. Spontaneous addition of the methide to these gamma-butyrolactones leads to peniphenone D and penilactone D, which undergo again stereospecific attacking by methide to give penilactones A and B. The chain is Clavatol synthase claF from Penicillium crustosum (Blue mold fungus).